Reading from the N-terminus, the 1551-residue chain is UDP-glucose:glycoprotein glucosyltransferase 1 (1551 aa).

An N-terminal signal peptide occupies residues 1–42 (MCSRGDANTADAAAARRVTGLRYNMRLLIALALPCLFSLAEA). N-linked (GlcNAc...) asparagine glycosylation is found at Asn-269, Asn-536, and Asn-1228. Residues 1244 to 1551 (KAEEVKQDKD…QEGSQKHEEL (308 aa)) form a glucosyltransferase region. Ser-1277 is modified (phosphoserine). Positions 1531–1551 (KELGTLHTEETQEGSQKHEEL) are disordered. The Prevents secretion from ER signature appears at 1548–1551 (HEEL).

Belongs to the glycosyltransferase 8 family. In terms of assembly, monomer as well as in a tight complex with SELENOF. Interacts with METTL23. Part of a large chaperone multiprotein complex comprising DNAJB11, HSP90B1, HSPA5, HYOU, PDIA2, PDIA4, PDIA6, PPIB, SDF2L1, UGGT1 and very small amounts of ERP29, but not, or at very low levels, CALR nor CANX. The cofactor is Ca(2+). It depends on Mn(2+) as a cofactor.

It is found in the endoplasmic reticulum lumen. It localises to the endoplasmic reticulum-Golgi intermediate compartment. The enzyme catalyses N(4)-(alpha-D-Man-(1-&gt;2)-alpha-D-Man-(1-&gt;2)-alpha-D-Man-(1-&gt;3)-[alpha-D-Man-(1-&gt;2)-alpha-D-Man-(1-&gt;3)-[alpha-D-Man-(1-&gt;2)-alpha-D-Man-(1-&gt;6)]-alpha-D-Man-(1-&gt;6)]-beta-D-Man-(1-&gt;4)-beta-D-GlcNAc-(1-&gt;4)-beta-D-GlcNAc)-L-asparaginyl-[protein] (N-glucan mannose isomer 9A1,2,3B1,2,3) + UDP-alpha-D-glucose = N(4)-(alpha-D-Glc-(1-&gt;3)-alpha-D-Man-(1-&gt;2)-alpha-D-Man-(1-&gt;2)-alpha-D-Man-(1-&gt;3)-[alpha-D-Man-(1-&gt;2)-alpha-D-Man-(1-&gt;3)-[alpha-D-Man-(1-&gt;2)-alpha-D-Man-(1-&gt;6)]-alpha-D-Man-(1-&gt;6)]-beta-D-Man-(1-&gt;4)-beta-D-GlcNAc-(1-&gt;4)-beta-D-GlcNAc)-L-asparaginyl-[protein] + UDP + H(+). It participates in protein modification; protein glycosylation. Its function is as follows. Recognizes glycoproteins with minor folding defects. Reglucosylates single N-glycans near the misfolded part of the protein, thus providing quality control for protein folding in the endoplasmic reticulum. Reglucosylated proteins are recognized by calreticulin for recycling to the endoplasmic reticulum and refolding or degradation. The chain is UDP-glucose:glycoprotein glucosyltransferase 1 (Uggt1) from Mus musculus (Mouse).